The chain runs to 172 residues: Large ribosomal subunit protein uL10 (172 aa).

It belongs to the universal ribosomal protein uL10 family. Part of the ribosomal stalk of the 50S ribosomal subunit. The N-terminus interacts with L11 and the large rRNA to form the base of the stalk. The C-terminus forms an elongated spine to which L12 dimers bind in a sequential fashion forming a multimeric L10(L12)X complex.

Forms part of the ribosomal stalk, playing a central role in the interaction of the ribosome with GTP-bound translation factors. This chain is Large ribosomal subunit protein uL10, found in Bartonella tribocorum (strain CIP 105476 / IBS 506).